We begin with the raw amino-acid sequence, 287 residues long: Protein UL24 homolog (287 aa).

2 disordered regions span residues 1-33 (MARR…FSRR) and 254-287 (RVGK…DSNL). Positions 16–33 (HRSRTRSKTAHHRKFSRR) are enriched in basic residues.

This sequence belongs to the herpesviridae UL24 family.

The protein resides in the virion. It localises to the host cytoplasm. The protein localises to the host nucleus. Its subcellular location is the host nucleolus. It is found in the host Golgi apparatus. Functionally, may participate in nuclear egress of viral particles. Plays a role in the dispersal of several host nucleolar proteins including NCL/nucleolin and NPM1. Since deletion of host NCL/nucleolin negatively impact on nuclear egress, UL24 supposedly acts on this process through its effect on host nucleoli. This is Protein UL24 homolog from Infectious laryngotracheitis virus (strain Thorne V882) (ILTV).